Consider the following 234-residue polypeptide: Adenosine 5'-phosphosulfate reductase (234 aa).

[4Fe-4S] cluster is bound by residues cysteine 120, cysteine 121, cysteine 203, and cysteine 206. Catalysis depends on cysteine 229, which acts as the Nucleophile; cysteine thiosulfonate intermediate.

Belongs to the PAPS reductase family. CysH subfamily. [4Fe-4S] cluster serves as cofactor.

Its subcellular location is the cytoplasm. The catalysed reaction is [thioredoxin]-disulfide + sulfite + AMP + 2 H(+) = adenosine 5'-phosphosulfate + [thioredoxin]-dithiol. It participates in sulfur metabolism; hydrogen sulfide biosynthesis; sulfite from sulfate. In terms of biological role, catalyzes the formation of sulfite from adenosine 5'-phosphosulfate (APS) using thioredoxin as an electron donor. This Bacillus cytotoxicus (strain DSM 22905 / CIP 110041 / 391-98 / NVH 391-98) protein is Adenosine 5'-phosphosulfate reductase.